The following is a 124-amino-acid chain: Large ribosomal subunit protein eL31 (124 aa).

Belongs to the eukaryotic ribosomal protein eL31 family. In terms of assembly, component of the large ribosomal subunit.

It localises to the cytoplasm. Its function is as follows. Component of the large ribosomal subunit. The ribosome is a large ribonucleoprotein complex responsible for the synthesis of proteins in the cell. The protein is Large ribosomal subunit protein eL31 (rpl31) of Paralichthys olivaceus (Bastard halibut).